Here is a 292-residue protein sequence, read N- to C-terminus: 33 kDa chaperonin (292 aa).

2 cysteine pairs are disulfide-bonded: Cys230–Cys232 and Cys263–Cys266.

This sequence belongs to the HSP33 family. In terms of processing, under oxidizing conditions two disulfide bonds are formed involving the reactive cysteines. Under reducing conditions zinc is bound to the reactive cysteines and the protein is inactive.

The protein resides in the cytoplasm. Its function is as follows. Redox regulated molecular chaperone. Protects both thermally unfolding and oxidatively damaged proteins from irreversible aggregation. Plays an important role in the bacterial defense system toward oxidative stress. The sequence is that of 33 kDa chaperonin from Salmonella typhimurium (strain LT2 / SGSC1412 / ATCC 700720).